The following is a 328-amino-acid chain: MADLLNVLKDKLSGKNVKIVLPEGEDERVLTAATQLQATDYVTPIVLGDETKVQSLAQKLDLDISNIELINPATSELKAELVQSFVERRKGKATEEQAQELLNNVNYFGTMLVYAGKADGLVSGAAHSTGDTVRPALQIIKTKPGVSRTSGIFFMIKGDEQYIFGDCAINPELDSQGLAEIAVESAKSALSFGMDPKVAMLSFSTKGSAKSDDVTKVQEAVKLAQQKAEEEKLEAIIDGEFQFDAAIVPGVAEKKAPGAKLQGDANVFVFPSLEAGNIGYKIAQRLGGYDAVGPVLQGLNSPVNDLSRGCSIEDVYNLSIITAAQALQ.

This sequence belongs to the phosphate acetyltransferase and butyryltransferase family.

Its subcellular location is the cytoplasm. It catalyses the reaction acetyl-CoA + phosphate = acetyl phosphate + CoA. The protein operates within metabolic intermediate biosynthesis; acetyl-CoA biosynthesis; acetyl-CoA from acetate: step 2/2. This is Phosphate acetyltransferase (pta) from Staphylococcus aureus (strain COL).